We begin with the raw amino-acid sequence, 153 residues long: Histone H2B.3 (153 aa).

2 stretches are compositionally biased toward basic and acidic residues: residues 1 to 28 (MAPK…EKAP) and 36 to 53 (EKRL…EGRK). Residues 1 to 61 (MAPKAEKKPA…RKAGRKKAKK (61 aa)) are disordered. 2 positions are modified to N6-acetyllysine: lysine 7 and lysine 37. A Glycyl lysine isopeptide (Lys-Gly) (interchain with G-Cter in ubiquitin) cross-link involves residue lysine 149.

It belongs to the histone H2B family. In terms of assembly, the nucleosome is a histone octamer containing two molecules each of H2A, H2B, H3 and H4 assembled in one H3-H4 heterotetramer and two H2A-H2B heterodimers. The octamer wraps approximately 147 bp of DNA. In terms of processing, can be acetylated to form H2BK6ac and H2BK33ac. Post-translationally, monoubiquitinated by BRE1 to form H2BK143ub1 and deubiquitinated by UBP26. Required for heterochromatic histone H3 di- and trimethylation at H3K4me. May give a specific tag for epigenetic transcriptional activation.

The protein localises to the nucleus. It is found in the chromosome. Functionally, core component of nucleosome. Nucleosomes wrap and compact DNA into chromatin, limiting DNA accessibility to the cellular machineries which require DNA as a template. Histones thereby play a central role in transcription regulation, DNA repair, DNA replication and chromosomal stability. DNA accessibility is regulated via a complex set of post-translational modifications of histones, also called histone code, and nucleosome remodeling. This Oryza sativa subsp. japonica (Rice) protein is Histone H2B.3 (H2B.3).